The chain runs to 161 residues: Large ribosomal subunit protein uL11 (161 aa).

This sequence belongs to the universal ribosomal protein uL11 family. In terms of assembly, part of the ribosomal stalk of the 50S ribosomal subunit. Interacts with L10 and the large rRNA to form the base of the stalk. L10 forms an elongated spine to which L12 dimers bind in a sequential fashion forming a multimeric L10(L12)X complex.

Functionally, forms part of the ribosomal stalk which helps the ribosome interact with GTP-bound translation factors. The protein is Large ribosomal subunit protein uL11 of Methanocaldococcus jannaschii (strain ATCC 43067 / DSM 2661 / JAL-1 / JCM 10045 / NBRC 100440) (Methanococcus jannaschii).